The chain runs to 641 residues: Isomalto-dextranase (641 aa).

The segment at residues 1-39 (MMNLSRRTLLTTGSAATLAYALGMAGSAQAATAVTARPG) is a signal peptide (tat-type signal). The active-site Nucleophile is Asp227. Asp288 (proton donor) is an active-site residue. In terms of domain architecture, CBM6 spans 500 to 640 (TRYPAAFAAW…AINLNWIELD (141 aa)). The tract at residues 556–588 (SGYRYANATDDNTTSKTTTKKANPEKADRSTVD) is disordered. Residues 561-576 (ANATDDNTTSKTTTKK) are compositionally biased toward low complexity. The span at 577 to 586 (ANPEKADRST) shows a compositional bias: basic and acidic residues.

Belongs to the glycosyl hydrolase 27 family. Predicted to be exported by the Tat system. The position of the signal peptide cleavage has been experimentally proven.

Its subcellular location is the secreted. It catalyses the reaction Hydrolysis of (1-&gt;6)-alpha-D-glucosidic linkages in polysaccharides, to remove successive isomaltose units from the non-reducing ends of the chains.. This Arthrobacter globiformis protein is Isomalto-dextranase (imd).